A 199-amino-acid chain; its full sequence is N-(5'-phosphoribosyl)anthranilate isomerase (199 aa).

This sequence belongs to the TrpF family.

The catalysed reaction is N-(5-phospho-beta-D-ribosyl)anthranilate = 1-(2-carboxyphenylamino)-1-deoxy-D-ribulose 5-phosphate. The protein operates within amino-acid biosynthesis; L-tryptophan biosynthesis; L-tryptophan from chorismate: step 3/5. This chain is N-(5'-phosphoribosyl)anthranilate isomerase, found in Streptococcus pneumoniae (strain Hungary19A-6).